The chain runs to 183 residues: Large ribosomal subunit protein uL6 (183 aa).

It belongs to the universal ribosomal protein uL6 family. Part of the 50S ribosomal subunit.

Functionally, this protein binds to the 23S rRNA, and is important in its secondary structure. It is located near the subunit interface in the base of the L7/L12 stalk, and near the tRNA binding site of the peptidyltransferase center. The protein is Large ribosomal subunit protein uL6 of Chlamydia felis (strain Fe/C-56) (Chlamydophila felis).